The following is a 309-amino-acid chain: Protein FdhE (309 aa).

Belongs to the FdhE family.

It localises to the cytoplasm. In terms of biological role, necessary for formate dehydrogenase activity. The polypeptide is Protein FdhE (Salmonella enteritidis PT4 (strain P125109)).